A 150-amino-acid chain; its full sequence is Catabolic 3-dehydroquinase 2 (150 aa).

The Proton acceptor role is filled by Y23. N74, H80, and D87 together coordinate substrate. Residue H100 is the Proton donor of the active site. Substrate is bound by residues 101–102 (IT) and R111.

It belongs to the type-II 3-dehydroquinase family. As to quaternary structure, homododecamer. Adopts a ring-like structure, composed of an arrangement of two hexameric rings stacked on top of one another.

The enzyme catalyses 3-dehydroquinate = 3-dehydroshikimate + H2O. It participates in aromatic compound metabolism; 3,4-dihydroxybenzoate biosynthesis; 3,4-dihydroxybenzoate from 3-dehydroquinate: step 1/2. Is involved in the catabolism of quinate. Allows the utilization of quinate as carbon source via the beta-ketoadipate pathway. This chain is Catabolic 3-dehydroquinase 2, found in Aspergillus fumigatus (strain ATCC MYA-4609 / CBS 101355 / FGSC A1100 / Af293) (Neosartorya fumigata).